We begin with the raw amino-acid sequence, 415 residues long: Dynein assembly factor with WD repeat domains 1 (415 aa).

WD repeat units follow at residues 90 to 129, 132 to 174, 175 to 214, 217 to 256, 259 to 298, 301 to 340, 343 to 384, and 386 to 415; these read AHIL…ELHT, GHKN…HTFR, GHTA…EVVT, GHLA…KVHT, GHCA…YVAT, GHDD…CVTK, GHEG…QVLE, and HTDE…RIWR.

This sequence belongs to the WD repeat WDR69 family. In terms of assembly, interacts with IFT46. As to expression, in early mouse embryos, expression is limited to distal, motile ciliated cells of the node.

It localises to the cytoplasm. Its subcellular location is the cytoskeleton. The protein localises to the flagellum basal body. It is found in the flagellum axoneme. In terms of biological role, required for axonemal dynein assembly and ciliary motility in ciliated organs, including Kupffer's vesicle, during embryogenesis. Facilitates the onset of robust cilia motility during development. The protein is Dynein assembly factor with WD repeat domains 1 of Mus musculus (Mouse).